Here is a 278-residue protein sequence, read N- to C-terminus: UPF0276 protein Ssed_2857 (278 aa).

This sequence belongs to the UPF0276 family.

The polypeptide is UPF0276 protein Ssed_2857 (Shewanella sediminis (strain HAW-EB3)).